The sequence spans 240 residues: Allene oxide cyclase, chloroplastic (240 aa).

Residues 1–49 (MAAAAPSRVSVRAAAPGQTGGFAKIRPQVVVAAAARSAGVSGRRARSVR) constitute a chloroplast transit peptide.

This sequence belongs to the allene oxide cyclase family.

It localises to the plastid. The protein resides in the chloroplast. The enzyme catalyses (9Z,13S,15Z)-12,13-epoxyoctadeca-9,11,15-trienoate = (9S,13S,15Z)-12-oxophyto-10,15-dienoate. It participates in lipid metabolism; polyunsaturated fatty acid biosynthesis. In terms of biological role, involved in the production of 12-oxo-phytodienoic acid (OPDA), a precursor of jasmonic acid (JA). Required for the production of JA in response to wounding. Necessary for flower and coleoptile development regulation by light, including blue (BL), red (RL) and far red (FR) lights. Involved in the auxin-mediated signaling pathway leading to growth stimulation. Essential for photodestruction of phyA upon activation by RL and FR. Implicated in responses to salt stress (NaCl). Functionally, confers resistance to incompatible strains of the blast fungus Magnaporthe grisea, jasmonic acid (JA) thus playing a significant role in the resistance to fungal infection. Implicated in riboflavin-induced resistance to the sheath blight Rhizoctonia solani. Required for Pseudomonas fluorescens-mediated JA-dependent induced systemic resistance (ISR). Confers some resistance, independently of the JA pathway but probably via OPDA accumulation, to brown planthopper (BPH, Nilaparvata lugens), a destructive, monophagous, piercing-sucking insect, mainly by reducing its feeding activity and survival rate. Triggers resistance to the chewing insect striped stem borer (SSB) Chilo suppressalis, to the root hemiparasite witchweed Striga hermonthica, and to the root feeder insect rice water weevil Lissorhoptrus oryzophilus, in a JA-dependent manner, by attenuating both the growth mass and growth rate of caterpillars. This chain is Allene oxide cyclase, chloroplastic, found in Oryza sativa subsp. indica (Rice).